A 445-amino-acid polypeptide reads, in one-letter code: Acetylcholine-gated chloride channel subunit acc-2 (445 aa).

The first 26 residues, 1-26, serve as a signal peptide directing secretion; it reads MIFTLLSTLPVLIITTELDYSELVHS. Residues 27-258 are Extracellular-facing; sequence AELVSSSSYI…LHVTIIFERR (232 aa). N-linked (GlcNAc...) asparagine glycosylation is found at Asn-46, Asn-59, Asn-121, and Asn-162. Cys-177 and Cys-191 are disulfide-bonded. Asn-218 carries N-linked (GlcNAc...) asparagine glycosylation. Residues 259 to 279 form a helical membrane-spanning segment; the sequence is FIWYFMQAYLPTYLTIFISWI. The Cytoplasmic portion of the chain corresponds to 280–286; it reads SFSLGSR. A helical membrane pass occupies residues 287–307; sequence AIPARTMLGVNSLLAIVFSFG. Residues 308–326 lie on the Extracellular side of the membrane; the sequence is NIMRNLPRVSYIKGIDVWM. The helical transmembrane segment at 327–347 threads the bilayer; that stretch reads LVSMTFIFCSLLELAIVGFMV. The Cytoplasmic portion of the chain corresponds to 348 to 407; the sequence is RDETVAKKKQQKKISGNISREESPHGIISERRFMFPPGCSESSKSLSSCTSGWTPERIDS. The helical transmembrane segment at 408–428 threads the bilayer; that stretch reads ISSVMFPFSFFVFNIIYWFYY. The Extracellular segment spans residues 429-445; it reads IHRKEIIKQNLINRVDG.

This sequence belongs to the ligand-gated ion channel (TC 1.A.9) family. Homopentamer (in vitro). May interact with either acc-3 or acc-4; the interactions do not result in significant heteropentameric ion channel activity. As to expression, expressed in RIA, RIG, PHA and AIZ glutamatergic neurons, URX and RIH cholinergic neurons, and in male-specific MCM neurons.

It localises to the cell membrane. In terms of biological role, acetylcholine-gated chloride channel subunit. Currents in channels are triggered in response to acetylcholine. Channel properties may be modulated by the formation of homomeric and heteromeric channels. This chain is Acetylcholine-gated chloride channel subunit acc-2, found in Caenorhabditis elegans.